Here is a 357-residue protein sequence, read N- to C-terminus: Arginine kinase Scy p 2.0101 (357 aa).

Residues 9-91 (KLEEGFKKLE…FDPIIEDYHK (83 aa)) enclose the Phosphagen kinase N-terminal domain. 64 to 68 (GVGVY) contacts L-arginine. 2 igE-binding and beta-hexosaminidase release from rat basophilic leukemia (RBL) cells regions span residues 113 to 127 (VDPD…RVRC) and 127 to 155 (CGRS…VSST). One can recognise a Phosphagen kinase C-terminal domain in the interval 119–356 (FVISTRVRCG…LELIKIEKEM (238 aa)). 122–126 (STRVR) is an ATP binding site. H185 is an ATP binding site. An intrachain disulfide couples C201 to C271. Residues 204 to 218 (WPTGRGIYHNDNKTF) are igE-binding and beta-hexosaminidase release from rat basophilic leukemia (RBL) cells. Residues 211 to 225 (YHNDNKTFLVWCNEE) are igE-binding, but no beta-hexosaminidase release from rat basophilic leukemia (RBL) cells. E225 contributes to the L-arginine binding site. R229 provides a ligand contact to ATP. An L-arginine-binding site is contributed by C271. ATP contacts are provided by residues 280–284 (RASVH) and 309–314 (RGTRGE). E314 is an L-arginine binding site. The segment at 316–330 (TEAEGGVYDISNKRR) is igE-binding, but no beta-hexosaminidase release from rat basophilic leukemia (RBL) cells.

This sequence belongs to the ATP:guanido phosphotransferase family. Glycosylated. As to expression, muscle (at protein level).

The catalysed reaction is L-arginine + ATP = N(omega)-phospho-L-arginine + ADP + H(+). Functionally, catalyzes the reversible transfer of high energy ATP gamma-phosphate group to L-arginine. In Scylla paramamosain (Mud crab), this protein is Arginine kinase Scy p 2.0101.